Consider the following 301-residue polypeptide: Sulfate adenylyltransferase subunit 2 (301 aa).

This sequence belongs to the PAPS reductase family. CysD subfamily. As to quaternary structure, heterodimer composed of CysD, the smaller subunit, and CysN.

It carries out the reaction sulfate + ATP + H(+) = adenosine 5'-phosphosulfate + diphosphate. It participates in sulfur metabolism; hydrogen sulfide biosynthesis; sulfite from sulfate: step 1/3. With CysN forms the ATP sulfurylase (ATPS) that catalyzes the adenylation of sulfate producing adenosine 5'-phosphosulfate (APS) and diphosphate, the first enzymatic step in sulfur assimilation pathway. APS synthesis involves the formation of a high-energy phosphoric-sulfuric acid anhydride bond driven by GTP hydrolysis by CysN coupled to ATP hydrolysis by CysD. In Citrifermentans bemidjiense (strain ATCC BAA-1014 / DSM 16622 / JCM 12645 / Bem) (Geobacter bemidjiensis), this protein is Sulfate adenylyltransferase subunit 2.